Here is a 437-residue protein sequence, read N- to C-terminus: Chromosomal replication initiator protein DnaA (437 aa).

The segment at 1–82 (MIFPIWKKCL…KIIINIEKKK (82 aa)) is domain I, interacts with DnaA modulators. Positions 82 to 101 (KLEKKKCIYKKKNIQIYLHS) are domain II. Residues 102–318 (EINKKYQFHN…GILKKIQILS (217 aa)) form a domain III, AAA+ region region. ATP-binding residues include glycine 146, glycine 148, lysine 149, and threonine 150. The interval 319 to 437 (ILNKEKITIN…FIYLFNQLNA (119 aa)) is domain IV, binds dsDNA.

It belongs to the DnaA family. Oligomerizes as a right-handed, spiral filament on DNA at oriC.

The protein resides in the cytoplasm. Plays an essential role in the initiation and regulation of chromosomal replication. ATP-DnaA binds to the origin of replication (oriC) to initiate formation of the DNA replication initiation complex once per cell cycle. Binds the DnaA box (a 9 base pair repeat at the origin) and separates the double-stranded (ds)DNA. Forms a right-handed helical filament on oriC DNA; dsDNA binds to the exterior of the filament while single-stranded (ss)DNA is stabiized in the filament's interior. The ATP-DnaA-oriC complex binds and stabilizes one strand of the AT-rich DNA unwinding element (DUE), permitting loading of DNA polymerase. After initiation quickly degrades to an ADP-DnaA complex that is not apt for DNA replication. Binds acidic phospholipids. The protein is Chromosomal replication initiator protein DnaA of Buchnera aphidicola subsp. Cinara cedri (strain Cc).